Consider the following 91-residue polypeptide: N.vectensis toxin 8 (91 aa).

The N-terminal stretch at 1-26 is a signal peptide; that stretch reads MNSLLKVAVVCLVMLVACFVPRVILT. Cystine bridges form between C45–C76, C47–C67, and C60–C77.

In terms of tissue distribution, expressed in ectodermal gland cells.

Functionally, has toxic effects on zebrafish larvae. It causes contractile paralysis and twitching of the tail within 20 minutes, followed by death within 30 minutes. Does not show any toxicity when injected into arthropods (cherry shrimps or grass shrimps). This is N.vectensis toxin 8 from Nematostella vectensis (Starlet sea anemone).